Reading from the N-terminus, the 130-residue chain is Small ribosomal subunit protein uS11 (130 aa).

This sequence belongs to the universal ribosomal protein uS11 family. As to quaternary structure, part of the 30S ribosomal subunit. Interacts with proteins S7 and S18. Binds to IF-3.

Functionally, located on the platform of the 30S subunit, it bridges several disparate RNA helices of the 16S rRNA. Forms part of the Shine-Dalgarno cleft in the 70S ribosome. The polypeptide is Small ribosomal subunit protein uS11 (Lactobacillus helveticus (strain DPC 4571)).